We begin with the raw amino-acid sequence, 587 residues long: Probable pectinesterase/pectinesterase inhibitor 61 (587 aa).

Positions 1–23 (MGYDRLGPSGPSNPNQKDPATSL) are disordered. Polar residues predominate over residues 10–19 (GPSNPNQKDP). A helical membrane pass occupies residues 35–55 (ILFTLAVLVVGVVCFGIFAGI). The segment at 69-223 (RKPTQAISRT…SEMVSNCLAI (155 aa)) is pectinesterase inhibitor 61. The tract at residues 273 to 571 (DITVSKDGSG…FTVAQFISGS (299 aa)) is pectinesterase 61. Thr-349 and Gln-379 together coordinate substrate. Residue Asp-402 is the Proton donor; for pectinesterase activity of the active site. The cysteines at positions 416 and 436 are disulfide-linked. The active-site Nucleophile; for pectinesterase activity is Asp-423. Positions 491 and 493 each coordinate substrate.

It in the N-terminal section; belongs to the PMEI family. In the C-terminal section; belongs to the pectinesterase family. Expressed in siliques, floral stems and rosettes leaves.

The protein localises to the membrane. The catalysed reaction is [(1-&gt;4)-alpha-D-galacturonosyl methyl ester](n) + n H2O = [(1-&gt;4)-alpha-D-galacturonosyl](n) + n methanol + n H(+). It participates in glycan metabolism; pectin degradation; 2-dehydro-3-deoxy-D-gluconate from pectin: step 1/5. In terms of biological role, acts in the modification of cell walls via demethylesterification of cell wall pectin. The sequence is that of Probable pectinesterase/pectinesterase inhibitor 61 (PME61) from Arabidopsis thaliana (Mouse-ear cress).